An 810-amino-acid polypeptide reads, in one-letter code: MANFINMYRQLLSLPLSALVKNNPIPANPIEELSLNIHQPIVYVLPYTSQTDFVIFRRNCLALGLPDPAEKNEINGVKLPRYVYLDEGRRIFKSKGAKDETTTIFNKYLELHRTSESLDVQLIPVSVLWGRSPGQEDKSDLPNLRLLNGIQKTFAAIWFGRDTFVRFSQAVSLRYMVVEHGSDEKIAQKLARVAKMHFAKQRISATGPRLPNRQAMFNKLLQSEAIRRAIEDEAKSKNISIEKAQKEAYKILDEIAADVSHSSLRAVDRFLRWLWNKLYSGIDVQNSNRVRKLALEGHEIVYVPCHRSHIDYLLLSYVLYHQGLVPPHIAAGINLNFWPIGRMFRSWGAFFIRRTFKGNRLYSAIFREYLSELFHRGYSVEYFIEGGRSRTGRLLAPKTGMMSMTLQALQHSQTRPISIVPVYVGYEHVLEVDTYAKELRGAAKEKENAGLVLRVIKKLRNLGQGFVNFGEPITLSNYLSQHFPDWKEQNHEEKPQWFTPAVNNISKQVMININKAAAVNSMNLVGTALLSSRQRALSREQLLEQLSSYQQLLQNVPYSTDVVLPNVTPQAMLEHVLALDRIGVLIEKDNFGEIVRLERSSAVLMTYYRNNIQHLFVLPSLVASIILHYEAIQKDLLLDAIRKIYPFLQGELFLHFNEDELNVQIHQIINEFARQSVINSNDNFLSINKSKVRILQLWSAGTREILQRYYITVTILQKQPAISRAELEKESQLVAQRLSVLHGINAPEFFDKAVFSSFIANLKEQRYFDESGYTVLDKIEELASTLSHLISTEICLTVKGTIEKSEDLSS.

Positions 305 to 310 match the HXXXXD motif motif; it reads CHRSHI.

Belongs to the GPAT/DAPAT family.

Its subcellular location is the cell inner membrane. It carries out the reaction sn-glycerol 3-phosphate + an acyl-CoA = a 1-acyl-sn-glycero-3-phosphate + CoA. It participates in phospholipid metabolism; CDP-diacylglycerol biosynthesis; CDP-diacylglycerol from sn-glycerol 3-phosphate: step 1/3. This is Glycerol-3-phosphate acyltransferase from Haemophilus influenzae (strain 86-028NP).